Here is a 122-residue protein sequence, read N- to C-terminus: Conotoxin flf14c (122 aa).

An N-terminal signal peptide occupies residues 1–22 (MGFRVLVLIVMVTTSALPFTFS). Residues 23 to 96 (EESGRSPFRP…AESPVGQKRW (74 aa)) constitute a propeptide that is removed on maturation. The interval 53 to 89 (RADGQTPDMHQPEMRRPEMRRPEVRRPEVRQPEFAES) is disordered. The segment covering 62-85 (HQPEMRRPEMRRPEVRRPEVRQPE) has biased composition (basic and acidic residues). 2 cysteine pairs are disulfide-bonded: Cys-101/Cys-121 and Cys-105/Cys-117.

In terms of tissue distribution, expressed by the venom duct.

Its subcellular location is the secreted. The chain is Conotoxin flf14c from Conus anabathrum floridanus (Florida cone).